Reading from the N-terminus, the 116-residue chain is Large ribosomal subunit protein uL18 (116 aa).

The protein belongs to the universal ribosomal protein uL18 family. As to quaternary structure, part of the 50S ribosomal subunit; part of the 5S rRNA/L5/L18/L25 subcomplex. Contacts the 5S and 23S rRNAs.

In terms of biological role, this is one of the proteins that bind and probably mediate the attachment of the 5S RNA into the large ribosomal subunit, where it forms part of the central protuberance. This chain is Large ribosomal subunit protein uL18, found in Exiguobacterium sibiricum (strain DSM 17290 / CCUG 55495 / CIP 109462 / JCM 13490 / 255-15).